A 318-amino-acid chain; its full sequence is UDP-3-O-acylglucosamine N-acyltransferase 1 (318 aa).

Catalysis depends on H230, which acts as the Proton acceptor.

This sequence belongs to the transferase hexapeptide repeat family. LpxD subfamily. In terms of assembly, homotrimer.

It catalyses the reaction a UDP-3-O-[(3R)-3-hydroxyacyl]-alpha-D-glucosamine + a (3R)-hydroxyacyl-[ACP] = a UDP-2-N,3-O-bis[(3R)-3-hydroxyacyl]-alpha-D-glucosamine + holo-[ACP] + H(+). It participates in bacterial outer membrane biogenesis; LPS lipid A biosynthesis. Functionally, catalyzes the N-acylation of UDP-3-O-acylglucosamine using 3-hydroxyacyl-ACP as the acyl donor. Is involved in the biosynthesis of lipid A, a phosphorylated glycolipid that anchors the lipopolysaccharide to the outer membrane of the cell. This chain is UDP-3-O-acylglucosamine N-acyltransferase 1, found in Sulfurimonas denitrificans (strain ATCC 33889 / DSM 1251) (Thiomicrospira denitrificans (strain ATCC 33889 / DSM 1251)).